Reading from the N-terminus, the 209-residue chain is Bilin biosynthesis protein RpcF (209 aa).

This sequence belongs to the CpcE/RpcE/PecE family.

Functionally, an enzyme involved in the biosynthesis of bilin. Might be involved in the specific attachment of phycoerythrobilin (PEB) to the R-phycocyanin II alpha chain. This is Bilin biosynthesis protein RpcF (rpcF) from Synechococcus sp. (strain WH8020).